The sequence spans 1578 residues: Neurexin-3 (1578 aa).

An N-terminal signal peptide occupies residues 1–27; the sequence is MSFTLHSVFFTLKVSSFLGSLVGLCLG. Residues 28-202 form the Laminin G-like 1 domain; the sequence is LEFMGLPNQW…SVQLEAEGPC (175 aa). The Extracellular segment spans residues 28–1503; sequence LEFMGLPNQW…EVIRESNSTT (1476 aa). 2 N-linked (GlcNAc...) asparagine glycosylation sites follow: N58 and N105. One can recognise an EGF-like 1 domain in the interval 198–235; that stretch reads AEGPCGERPCENGGICFLLDGHPTCDCSTTGYGGTLCS. Disulfide bonds link C202-C213, C207-C222, and C224-C234. 2 Laminin G-like domains span residues 260–444 and 451–643; these read ENVA…VFKC and DPIN…KSSC. The Ca(2+) site is built by D308, L325, and M378. Intrachain disulfides connect C408-C444, C614-C643, C651-C662, C656-C671, and C673-C683. In terms of domain architecture, EGF-like 2 spans 647 to 684; the sequence is SAKQCDSYPCKNNAVCKDGWNRFICDCTGTGYWGRTCE. Laminin G-like domains follow at residues 689–861 and 875–1050; these read ILSY…IDYC and DPVT…DRGC. Residues D736 and L753 each coordinate Ca(2+). N761 carries N-linked (GlcNAc...) asparagine glycosylation. R811 provides a ligand contact to Ca(2+). 4 disulfides stabilise this stretch: C1022–C1050, C1057–C1068, C1062–C1077, and C1079–C1089. The 38-residue stretch at 1053-1090 folds into the EGF-like 3 domain; the sequence is PSTTCQEDSCANQGVCMQQWEGFTCDCSMTSYSGNQCN. Residues 1094-1294 form the Laminin G-like 6 domain; the sequence is ATYIFGKSGG…NPNIKINGSV (201 aa). 2 residues coordinate Ca(2+): D1146 and I1163. Residue N1193 is glycosylated (N-linked (GlcNAc...) asparagine). Positions 1245 and 1247 each coordinate Ca(2+). N1291 and N1335 each carry an N-linked (GlcNAc...) asparagine glycan. The interval 1328–1352 is disordered; it reads ATTTTRKNRSTASIQPTSDDLVSSA. The segment covering 1337–1352 has biased composition (polar residues); that stretch reads STASIQPTSDDLVSSA. O-linked (Xyl...) (heparan sulfate) serine glycosylation occurs at S1351. N-linked (GlcNAc...) asparagine glycosylation occurs at N1500. Residues 1504–1524 form a helical membrane-spanning segment; the sequence is GMVVGIVAAAALCILILLYAM. The Cytoplasmic segment spans residues 1525 to 1578; it reads YKYRNRDEGSYQVDETRNYISNSAQSNGTLMKEKQASSKSGHKKQKNKDKEYYV. The disordered stretch occupies residues 1546-1578; it reads NSAQSNGTLMKEKQASSKSGHKKQKNKDKEYYV.

This sequence belongs to the neurexin family. In terms of assembly, the laminin G-like domain 2 binds to NXPH1. Isoform 8/alpha-4B binds to alpha-dystroglycan. The cytoplasmic C-terminal region binds to CASK. Specific isoforms bind neuroligins NLGN1, NLGN2 and NLGN3. Interacts with CLSTN3. O-glycosylated; contains heparan sulfate. Heparan sulfate attachment is required for synapse development by mediating interactions with neuroligins. Brain.

Its subcellular location is the presynaptic cell membrane. Functionally, neuronal cell surface protein that may be involved in cell recognition and cell adhesion. May mediate intracellular signaling. This Rattus norvegicus (Rat) protein is Neurexin-3 (Nrxn3).